The primary structure comprises 159 residues: Ribosome maturation factor RimM (159 aa).

One can recognise a PRC barrel domain in the interval 86–159 (SDAFHLPKLI…IHIETIEGLI (74 aa)).

It belongs to the RimM family. In terms of assembly, binds ribosomal protein uS19.

Its subcellular location is the cytoplasm. Functionally, an accessory protein needed during the final step in the assembly of 30S ribosomal subunit, possibly for assembly of the head region. Essential for efficient processing of 16S rRNA. May be needed both before and after RbfA during the maturation of 16S rRNA. It has affinity for free ribosomal 30S subunits but not for 70S ribosomes. The chain is Ribosome maturation factor RimM from Acholeplasma laidlawii (strain PG-8A).